Here is a 365-residue protein sequence, read N- to C-terminus: Phospho-N-acetylmuramoyl-pentapeptide-transferase (365 aa).

The next 10 membrane-spanning stretches (helical) occupy residues 19 to 39, 49 to 69, 92 to 112, 116 to 136, 156 to 176, 183 to 203, 215 to 235, 238 to 258, 279 to 299, and 345 to 365; these read TLLI…SSWA, LLIA…AVVP, AGTP…IAVV, FNPD…IGWV, LFLQ…YGPT, IMQF…FALV, VDGL…LLVA, NPAL…FVHH, LAAV…SGIF, and QIVG…MATA.

The protein belongs to the glycosyltransferase 4 family. MraY subfamily. Mg(2+) is required as a cofactor.

Its subcellular location is the cell inner membrane. It catalyses the reaction UDP-N-acetyl-alpha-D-muramoyl-L-alanyl-gamma-D-glutamyl-meso-2,6-diaminopimeloyl-D-alanyl-D-alanine + di-trans,octa-cis-undecaprenyl phosphate = di-trans,octa-cis-undecaprenyl diphospho-N-acetyl-alpha-D-muramoyl-L-alanyl-D-glutamyl-meso-2,6-diaminopimeloyl-D-alanyl-D-alanine + UMP. Its pathway is cell wall biogenesis; peptidoglycan biosynthesis. Catalyzes the initial step of the lipid cycle reactions in the biosynthesis of the cell wall peptidoglycan: transfers peptidoglycan precursor phospho-MurNAc-pentapeptide from UDP-MurNAc-pentapeptide onto the lipid carrier undecaprenyl phosphate, yielding undecaprenyl-pyrophosphoryl-MurNAc-pentapeptide, known as lipid I. The chain is Phospho-N-acetylmuramoyl-pentapeptide-transferase from Synechocystis sp. (strain ATCC 27184 / PCC 6803 / Kazusa).